Consider the following 75-residue polypeptide: Alpha-elapitoxin-Bc2a (75 aa).

Positions 1-2 are cleaved as a signal peptide; that stretch reads YT. 5 disulfide bridges follow: cysteine 5-cysteine 24, cysteine 17-cysteine 45, cysteine 30-cysteine 34, cysteine 49-cysteine 60, and cysteine 61-cysteine 66.

Belongs to the three-finger toxin family. Long-chain subfamily. Type II alpha-neurotoxin sub-subfamily. In terms of assembly, monomer in solution, homodimer in crystal state. Expressed by the venom gland.

It is found in the secreted. Its function is as follows. Binds to muscular and neuronal nicotinic acetylcholine receptor (nAChR) and inhibits acetylcholine from binding to the receptor, thereby impairing neuromuscular and neuronal transmission. Reversibly blocks chick and mouse muscle nicotinic acetylcholine receptors. Blocks muscle type nAChR with an IC(50)=30 nM, when heterologously expressed in oocytes. Also binds with high affinity to alpha-7/CHRNA7 nAChRs. In addition, shows a weak inhibition of neuronal alpha-3-beta-2/CHRNA3-CHRNB2 nAChR (IC(50)=2.9 uM). Selectively binds to alpha-1-delta subunit interface of the mouse muscle nicotinic acetylcholine receptor, with a 10-fold higher affinity for the adult than for the fetal receptors. In vivo, when intraperitoneally injected into mice, causes flaccid paralysis and respiratory distress, followed by death within 2-4 hours. The protein is Alpha-elapitoxin-Bc2a of Bungarus candidus (Malayan krait).